Reading from the N-terminus, the 757-residue chain is UDP-N-acetylmuramoyl-L-alanyl-D-glutamate--2,6-diaminopimelate ligase MurE homolog, chloroplastic (757 aa).

Positions 1 to 11 are enriched in low complexity; sequence MATAPLAFHLP. Residues 1–53 constitute a chloroplast transit peptide; the sequence is MATAPLAFHLPFPFPSASRPPPRLLPPSRRPPAARLAATRRFRPPTADDEPPE. Disordered regions lie at residues 1–112, 126–152, and 172–195; these read MATA…DEFF, FTRRGLIKPSAPAPSQPEEEDGLADEL, and VSLADEEDEEANGGGGGVDYGDDG. Residues 12–30 are compositionally biased toward pro residues; it reads FPFPSASRPPPRLLPPSRR. 2 stretches are compositionally biased toward acidic residues: residues 47–56 and 142–152; these read ADDEPPEAAE and PEEEDGLADEL.

It belongs to the MurCDEF family. MurE subfamily. In terms of assembly, component of the plastid-encoded plastid RNA polymerase (PEP) complex.

It localises to the plastid. The protein resides in the chloroplast. In terms of biological role, required for the activity of the plastid-encoded RNA polymerase (PEP) and full expression of genes transcribed by PEP. The sequence is that of UDP-N-acetylmuramoyl-L-alanyl-D-glutamate--2,6-diaminopimelate ligase MurE homolog, chloroplastic from Oryza sativa subsp. japonica (Rice).